A 443-amino-acid polypeptide reads, in one-letter code: Glutamyl-tRNA reductase (443 aa).

Residues 49–52 (TCNR), Ser109, 114–116 (ETQ), and Gln120 contribute to the substrate site. Cys50 functions as the Nucleophile in the catalytic mechanism. 189 to 194 (GAGKMS) is a binding site for NADP(+).

Belongs to the glutamyl-tRNA reductase family. As to quaternary structure, homodimer.

The enzyme catalyses (S)-4-amino-5-oxopentanoate + tRNA(Glu) + NADP(+) = L-glutamyl-tRNA(Glu) + NADPH + H(+). It participates in porphyrin-containing compound metabolism; protoporphyrin-IX biosynthesis; 5-aminolevulinate from L-glutamyl-tRNA(Glu): step 1/2. Its function is as follows. Catalyzes the NADPH-dependent reduction of glutamyl-tRNA(Glu) to glutamate 1-semialdehyde (GSA). In Heliobacterium mobile (Heliobacillus mobilis), this protein is Glutamyl-tRNA reductase.